The chain runs to 308 residues: MNETMKSRFGKVAVMMGGNSCEREISLMSGQGVLNALRGQGVDAHAFDPAEKPLAALQSEGFDRVFIALHGAFGEDGTLQGALETMGIPYTGCGVMASAIGMDKWRSKLVWKAAGLPVPDFRLLADDSDFAAIEAELGLPMFVKPACEGSSLGVTKVRKAGELAQAYAEARKFDPLVLAEQFVGGGEYTVALLEGRALPAIKIEPATEFYDYDAKYFRDDTVYRCPAGMDDEHELAMRRLAEQGFAVLGGSGWGRIDFLVDEAGQPYLLEINTAPGMTTHSLVPMAAREAGLTYEALCLKVLEAAHVG.

In terms of domain architecture, ATP-grasp spans K108–E303. E134 to T189 contributes to the ATP binding site. Mg(2+) is bound by residues D257, E270, and N272.

Belongs to the D-alanine--D-alanine ligase family. It depends on Mg(2+) as a cofactor. Mn(2+) serves as cofactor.

Its subcellular location is the cytoplasm. It catalyses the reaction 2 D-alanine + ATP = D-alanyl-D-alanine + ADP + phosphate + H(+). The protein operates within cell wall biogenesis; peptidoglycan biosynthesis. Its function is as follows. Cell wall formation. The protein is D-alanine--D-alanine ligase of Laribacter hongkongensis (strain HLHK9).